Consider the following 348-residue polypeptide: Lipopolysaccharide heptosyltransferase 2 (348 aa).

This sequence belongs to the glycosyltransferase 9 family.

The catalysed reaction is an L-alpha-D-Hep-(1-&gt;5)-[alpha-Kdo-(2-&gt;4)]-alpha-Kdo-(2-&gt;6)-lipid A + ADP-L-glycero-beta-D-manno-heptose = an L-alpha-D-Hep-(1-&gt;3)-L-alpha-D-Hep-(1-&gt;5)-[alpha-Kdo-(2-&gt;4)]-alpha-Kdo-(2-&gt;6)-lipid A + ADP + H(+). It carries out the reaction L-alpha-D-Hep-(1-&gt;5)-[alpha-Kdo-(2-&gt;4)]-alpha-Kdo-(2-&gt;6)-lipid A (E. coli) + ADP-L-glycero-beta-D-manno-heptose = L-alpha-D-Hep-(1-&gt;3)-L-alpha-D-Hep-(1-&gt;5)-[alpha-Kdo-(2-&gt;4)]-alpha-Kdo-(2-&gt;6)-lipid A (E. coli) + ADP + H(+). It participates in bacterial outer membrane biogenesis; LPS core biosynthesis. Its function is as follows. Glycosyltransferase involved in the biosynthesis of the core oligosaccharide region of lipopolysaccharide (LPS). Catalyzes the addition of the second heptose unit to the heptosyl-Kdo2-lipid A module. The analog ADP-mannose can serve as an alternative donor in place of ADP-L-glycero-D-manno-heptose, but with lower efficiency. This Escherichia coli (strain K12) protein is Lipopolysaccharide heptosyltransferase 2.